A 201-amino-acid polypeptide reads, in one-letter code: Translation initiation factor IF-3 (201 aa).

The tract at residues 170 to 201 (TPKSASKKGHTPPKTQVEASKQANESAETEEE) is disordered. Positions 182–195 (PKTQVEASKQANES) are enriched in polar residues.

This sequence belongs to the IF-3 family. Monomer.

Its subcellular location is the cytoplasm. Its function is as follows. IF-3 binds to the 30S ribosomal subunit and shifts the equilibrium between 70S ribosomes and their 50S and 30S subunits in favor of the free subunits, thus enhancing the availability of 30S subunits on which protein synthesis initiation begins. The polypeptide is Translation initiation factor IF-3 (Porphyromonas gingivalis (strain ATCC BAA-308 / W83)).